A 583-amino-acid chain; its full sequence is Lamin-B3 (583 aa).

The tract at residues 1–30 (MATSTPSRAREHASAAQSPGSPTRISRMQE) is disordered. The interval 2–32 (ATSTPSRAREHASAAQSPGSPTRISRMQEKE) is head. Positions 15–26 (AAQSPGSPTRIS) are enriched in polar residues. Serine 21 carries the phosphoserine modification. One can recognise an IF rod domain in the interval 30-386 (EKEDLRHLND…KMLEGEEQRL (357 aa)). Positions 33–67 (DLRHLNDRLAAYIERVRSLEADKSLLKIQLEEREE) are coil 1A. Residues 68 to 79 (VSSREVTNLRQL) are linker 1. Positions 80-215 (YETELADARK…QKNIHTQEVK (136 aa)) are coil 1B. The segment at 216-242 (EIKKRHDTRIVEIDSGRRVEFESKLAE) is linker 2. The interval 243-384 (ALQELRRDHE…YRKMLEGEEQ (142 aa)) is coil 2. The interval 383-431 (EQRLKLSPSPSQRSTVSRASTSQTSRLLRGKKRKLDETGRSVTKRSYKV) is disordered. The interval 385 to 580 (RLKLSPSPSQ…QSHQSVDPSC (196 aa)) is tail. Residues 390 to 408 (PSPSQRSTVSRASTSQTSR) show a composition bias toward polar residues. Residue serine 391 is modified to Phosphoserine. The 118-residue stretch at 429 to 546 (YKVVQQASST…EECAERTLYR (118 aa)) folds into the LTD domain. Position 580 is a cysteine methyl ester (cysteine 580). Cysteine 580 is lipidated: S-farnesyl cysteine. Positions 581–583 (SIM) are cleaved as a propeptide — removed in mature form.

It belongs to the intermediate filament family. Post-translationally, phosphorylation plays a key role in lamin organization, subcellular localization and nuclear envelope disintegration. Phosphorylation by CDK1 at Ser-21 at the onset of mitosis drives lamin disassembly and nuclear envelope breakdown.

It localises to the nucleus lamina. The protein localises to the nucleus envelope. The protein resides in the nucleus. It is found in the nucleoplasm. Its subcellular location is the nucleus matrix. Lamins are intermediate filament proteins that assemble into a filamentous meshwork, and which constitute the major components of the nuclear lamina, a fibrous layer on the nucleoplasmic side of the inner nuclear membrane. Lamins provide a framework for the nuclear envelope, bridging the nuclear envelope and chromatin, thereby playing an important role in nuclear assembly, chromatin organization, nuclear membrane and telomere dynamics. The structural integrity of the lamina is strictly controlled by the cell cycle, as seen by the disintegration and formation of the nuclear envelope in prophase and telophase, respectively. The polypeptide is Lamin-B3 (lmnb3.L) (Xenopus laevis (African clawed frog)).